The sequence spans 1304 residues: MAKIAKTHEDIEAQIREIQGKKAALDEAQGVGLDSTGYYDQEIYGGSDSRFAGYVTSIAATELEDDDDDYSSSTSLLGQKKPGYHAPVALLNDIPQSTEQYDPFAEHRPPKIADREDEYKKHRRTMIISPERLDPFADGGKTPDPKMNARTYMDVMREQHLTKEEREIRQQLAEKAKAGELKVVNGAAASQPPSKRKRRWDQTADQTPGATPKKLSSWDQAETPGHTPSLRWDETPGRAKGSETPGATPGSKIWDPTPSHTPAGAATPGRGDTPGHATPGHGGATSSARKNRWDETPKTERDTPGHGSGWAETPRTDRGGDSIGETPTPGASKRKSRWDETPASQMGGSTPVLTPGKTPIGTPAMNMATPTPGHIMSMTPEQLQAWRWEREIDERNRPLSDEELDAMFPEGYKVLPPPAGYVPIRTPARKLTATPTPLGGMTGFHMQTEDRTMKSVNDQPSGNLPFLKPDDIQYFDKLLVDVDESTLSPEEQKERKIMKLLLKIKNGTPPMRKAALRQITDKAREFGAGPLFNQILPLLMSPTLEDQERHLLVKVIDRILYKLDDLVRPYVHKILVVIEPLLIDEDYYARVEGREIISNLAKAAGLATMISTMRPDIDNMDEYVRNTTARAFAVVASALGIPSLLPFLKAVCKSKKSWQARHTGIKIVQQIAILMGCAILPHLRSLVEIIEHGLVDEQQKVRTISALAIAALAEAATPYGIESFDSVLKPLWKGIRQHRGKGLAAFLKAIGYLIPLMDAEYANYYTREVMLILIREFQSPDEEMKKIVLKVVKQCCGTDGVEANYIKTEILPPFFKHFWQHRMALDRRNYRQLVDTTVELANKVGAAEIISRIVDDLKDEAEQYRKMVMETIEKIMGNLGAADIDHKLEEQLIDGILYAFQEQTTEDSVMLNGFGTVVNALGKRVKPYLPQICGTVLWRLNNKSAKVRQQAADLISRTAVVMKTCQEEKLMGHLGVVLYEYLGEEYPEVLGSILGALKAIVNVIGMHKMTPPIKDLLPRLTPILKNRHEKVQENCIDLVGRIADRGAEYVSAREWMRICFELLELLKAHKKAIRRATVNTFGYIAKAIGPHDVLATLLNNLKVQERQNRVCTTVAIAIVAETCSPFTVLPALMNEYRVPELNVQNGVLKSLSFLFEYIGEMGKDYIYAVTPLLEDALMDRDLVHRQTASAVVQHMSLGVYGFGCEDSLNHLLNYVWPNVFETSPHVIQAVMGALEGLRVAIGPCRMLQYCLQGLFHPARKVRDVYWKIYNSIYIGSQDALIAHYPRIYNDDKNTYIRYELDYIL.

Disordered regions lie at residues 100–119 (QYDP…EDEY) and 124–148 (RTMI…PKMN). The segment covering 104 to 119 (FAEHRPPKIADREDEY) has biased composition (basic and acidic residues). Thr-125 is subject to Phosphothreonine. Ser-129 is modified (phosphoserine). Residue Lys-141 is modified to N6-acetyllysine. At Thr-142 the chain carries Phosphothreonine. At Arg-157 the chain carries Citrulline. Residues 173-360 (AEKAKAGELK…PVLTPGKTPI (188 aa)) are disordered. A U2AF homology region; mediates interaction with RBM39 region spans residues 190–342 (SQPPSKRKRR…KRKSRWDETP (153 aa)). At Ser-194 the chain carries Phosphoserine. A phosphothreonine mark is found at Thr-203, Thr-207, and Thr-211. Lys-214 bears the N6-acetyllysine; alternate mark. Lys-214 is covalently cross-linked (Glycyl lysine isopeptide (Lys-Gly) (interchain with G-Cter in SUMO2); alternate). 2 positions are modified to phosphothreonine: Thr-223 and Thr-227. The tract at residues 223-491 (TPGHTPSLRW…VDESTLSPEE (269 aa)) is interaction with PPP1R8. At Ser-229 the chain carries Phosphoserine. The span at 231-241 (RWDETPGRAKG) shows a compositional bias: basic and acidic residues. Residues Thr-235, Thr-244, Thr-248, Thr-257, Thr-261, Thr-267, Thr-273, and Thr-278 each carry the phosphothreonine modification. At Ser-287 the chain carries Phosphoserine. Positions 291–304 (NRWDETPKTERDTP) are enriched in basic and acidic residues. Residues Thr-296, Thr-299, Thr-303, and Thr-313 each carry the phosphothreonine modification. Residue Ser-322 is modified to Phosphoserine. Thr-326 and Thr-328 each carry phosphothreonine. The residue at position 332 (Ser-332) is a Phosphoserine. A Phosphothreonine modification is found at Thr-341. The span at 342-352 (PASQMGGSTPV) shows a compositional bias: polar residues. A phosphoserine mark is found at Ser-344 and Ser-349. 2 positions are modified to phosphothreonine: Thr-350 and Thr-354. Ser-400 is modified (phosphoserine). Lys-413 is covalently cross-linked (Glycyl lysine isopeptide (Lys-Gly) (interchain with G-Cter in SUMO2); alternate). Lys-413 is covalently cross-linked (Glycyl lysine isopeptide (Lys-Gly) (interchain with G-Cter in SUMO1); alternate). Thr-426 carries the post-translational modification Phosphothreonine. Residue Lys-430 forms a Glycyl lysine isopeptide (Lys-Gly) (interchain with G-Cter in SUMO2) linkage. The residue at position 434 (Thr-434) is a Phosphothreonine; by DYRK1A. Residue Thr-436 is modified to Phosphothreonine. Ser-488 carries the phosphoserine modification. 11 HEAT repeats span residues 529–568 (GPLF…DLVR), 569–603 (PYVH…LAKA), 604–641 (AGLA…ALGI), 643–677 (SLLP…LMGC), 680–718 (LPHL…AATP), 763–801 (NYYT…TDGV), 843–881 (KVGA…NLGA), 1010–1048 (TPPI…RGAE), 1052–1090 (AREW…AIGP), 1122–1160 (TCSP…YIGE), and 1163–1201 (KDYI…GVYG). An interaction with SF3B14 region spans residues 529 to 568 (GPLFNQILPLLMSPTLEDQERHLLVKVIDRILYKLDDLVR). The interaction with PHF5A stretch occupies residues 547 to 550 (QERH). 2 positions are modified to N6-acetyllysine: Lys-554 and Lys-562. Residues 1156–1157 (EY) form an interaction with PHF5A region. The interval 1248-1304 (QYCLQGLFHPARKVRDVYWKIYNSIYIGSQDALIAHYPRIYNDDKNTYIRYELDYIL) is interaction with SF3B3 and SF3B5.

This sequence belongs to the SF3B1 family. As to quaternary structure, component of the 17S U2 SnRNP complex, a ribonucleoprotein complex that contains small nuclear RNA (snRNA) U2 and a number of specific proteins. Part of the SF3B subcomplex of the 17S U2 SnRNP complex. SF3B associates with the splicing subcomplex SF3A and a 12S RNA unit to form the U2 small nuclear ribonucleoproteins complex (U2 snRNP). Within the SF3B complex, interacts directly (via HEAT domain) with SF3B3, SF3B5, SF3B6 and (via HEAT domain) with PHF5A. The SF3B subcomplex interacts with U2AF2. Identified in the spliceosome C complex. Component of the minor (U12-type spliceosome) spliceosome. Within the minor spliceosome complex, interacts with SCNM1 and CRIPT. Component of the B-WICH complex, at least composed of SMARCA5/SNF2H, BAZ1B/WSTF, SF3B1, DEK, MYO1C, ERCC6, MYBBP1A and DDX21. Phosphorylated form interacts with PPP1R8. Interacts with PQBP1. Interacts with RBM17. Interacts with RBM39. Interacts with SETX. Interacts with RBM15. Interacts with USH1G. Interacts with SDE2. Interacts with U2AF1. Interacts with CACTIN. Interacts with ZRSR1. Interacts with CYREN. In terms of processing, phosphorylated. Phosphorylation occurs concomitantly with the splicing catalytic steps. Phosphorylation on Thr-244, Thr-248 and Thr-313 by cyclin-dependent kinases promotes interaction with PPP1R8 during mitosis. Citrullinated by PADI4.

The protein resides in the nucleus. The protein localises to the nucleus speckle. Functionally, component of the 17S U2 SnRNP complex of the spliceosome, a large ribonucleoprotein complex that removes introns from transcribed pre-mRNAs. The 17S U2 SnRNP complex (1) directly participates in early spliceosome assembly and (2) mediates recognition of the intron branch site during pre-mRNA splicing by promoting the selection of the pre-mRNA branch-site adenosine, the nucleophile for the first step of splicing. Within the 17S U2 SnRNP complex, SF3B1 is part of the SF3B subcomplex, which is required for 'A' complex assembly formed by the stable binding of U2 snRNP to the branchpoint sequence in pre-mRNA. Sequence independent binding of SF3A and SF3B subcomplexes upstream of the branch site is essential, it may anchor U2 snRNP to the pre-mRNA. May also be involved in the assembly of the 'E' complex. Also acts as a component of the minor spliceosome, which is involved in the splicing of U12-type introns in pre-mRNAs. Together with other U2 snRNP complex components may also play a role in the selective processing of microRNAs (miRNAs) from the long primary miRNA transcript, pri-miR-17-92. The chain is Splicing factor 3B subunit 1 from Homo sapiens (Human).